The following is an 80-amino-acid chain: Centromere protein X (80 aa).

Belongs to the CENP-X/MHF2 family. In terms of assembly, heterodimer with CENPX, sometimes called MHF; this interaction stabilizes both partners. MHF heterodimers can assemble to form tetrameric structures. MHF also coassemble with CENPT-CENPW heterodimers at centromeres to form the tetrameric CENP-T-W-S-X complex. Forms a discrete complex with FANCM and CENPX, called FANCM-MHF; this interaction, probably mediated by direct binding between CENPS and FANCM, leads to synergistic activation of double-stranded DNA binding and strongly stimulates FANCM-mediated DNA remodeling. Recruited by FANCM to the Fanconi anemia (FA) core complex, which consists of CENPS, CENPX, FANCA, FANCB, FANCC, FANCE, FANCF, FANCG, FANCL, FANCM, FAAP24 and FAAP100. The FA core complex associates with Bloom syndrome (BLM) complex, which consists of at least BLM, DNA topoisomerase 3-alpha (TOP3A), RMI1/BLAP75, RPA1/RPA70 and RPA2/RPA32. The super complex between FA and BLM is called BRAFT.

It is found in the nucleus. The protein resides in the chromosome. Its subcellular location is the centromere. It localises to the kinetochore. DNA-binding component of the Fanconi anemia (FA) core complex. Required for the normal activation of the FA pathway, leading to monoubiquitination of the FANCI-FANCD2 complex in response to DNA damage, cellular resistance to DNA cross-linking drugs, and prevention of chromosomal breakage. In complex with CENPS (MHF heterodimer), crucial cofactor for FANCM in both binding and ATP-dependent remodeling of DNA. Stabilizes FANCM. In complex with CENPS and FANCM (but not other FANC proteins), rapidly recruited to blocked forks and promotes gene conversion at blocked replication forks. In complex with CENPS, CENPT and CENPW (CENP-T-W-S-X heterotetramer), involved in the formation of a functional kinetochore outer plate, which is essential for kinetochore-microtubule attachment and faithful mitotic progression. As a component of MHF and CENP-T-W-S-X complexes, binds DNA and bends it to form a nucleosome-like structure. DNA-binding function is fulfilled in the presence of CENPS, with the following preference for DNA substates: Holliday junction &gt; double-stranded &gt; splay arm &gt; single-stranded. Does not bind DNA on its own. The chain is Centromere protein X (CENPX) from Gallus gallus (Chicken).